The sequence spans 385 residues: Multidrug resistance protein MdtE (385 aa).

A signal peptide spans 1–20; the sequence is MNRRRKLLIPLLFCGAMLTA. Cys21 carries the N-palmitoyl cysteine lipid modification. A lipid anchor (S-diacylglycerol cysteine) is attached at Cys21.

Belongs to the membrane fusion protein (MFP) (TC 8.A.1) family. Homotrimer. Part of the tripartite efflux system MdtEF-TolC, which is composed of an inner membrane transporter, MdtF, a membrane fusion protein, MdtE, and an outer membrane component, TolC. The complex forms a large protein conduit and can translocate molecules across both the inner and outer membranes.

The protein localises to the cell inner membrane. Functionally, part of the tripartite efflux system MdtEF-TolC, which confers resistance to various compounds. This is Multidrug resistance protein MdtE (mdtE) from Escherichia coli O157:H7.